The primary structure comprises 148 residues: UPF0756 membrane protein ETA_17460 (148 aa).

Transmembrane regions (helical) follow at residues 14–34 (ALSY…LIVI), 51–71 (MTVG…SGTI), 80–100 (FLHW…WLGG), and 112–132 (VVGG…GVPV).

It belongs to the UPF0756 family.

It localises to the cell membrane. The chain is UPF0756 membrane protein ETA_17460 from Erwinia tasmaniensis (strain DSM 17950 / CFBP 7177 / CIP 109463 / NCPPB 4357 / Et1/99).